Reading from the N-terminus, the 583-residue chain is Threonine--tRNA ligase (583 aa).

The segment at 185–478 (DHRKLGRELD…LVEHYGGAFP (294 aa)) is catalytic. The Zn(2+) site is built by Cys278, His329, and His455.

It belongs to the class-II aminoacyl-tRNA synthetase family. In terms of assembly, homodimer. Requires Zn(2+) as cofactor.

It is found in the cytoplasm. The enzyme catalyses tRNA(Thr) + L-threonine + ATP = L-threonyl-tRNA(Thr) + AMP + diphosphate + H(+). Functionally, catalyzes the attachment of threonine to tRNA(Thr) in a two-step reaction: L-threonine is first activated by ATP to form Thr-AMP and then transferred to the acceptor end of tRNA(Thr). Also edits incorrectly charged L-seryl-tRNA(Thr). The sequence is that of Threonine--tRNA ligase from Borrelia turicatae (strain 91E135).